The following is a 137-amino-acid chain: Putative nickel-responsive regulator (137 aa).

Residues histidine 79, histidine 90, histidine 92, and cysteine 98 each coordinate Ni(2+).

This sequence belongs to the transcriptional regulatory CopG/NikR family. Ni(2+) is required as a cofactor.

Its function is as follows. Transcriptional regulator. The chain is Putative nickel-responsive regulator from Campylobacter concisus (strain 13826).